The sequence spans 206 residues: MAAVAEREVLGMVAAVAAMVVMMAPPAAALVPYGYGYMLDDPFRVLEQSPLRPAGGVAAAAAAGEPAAVALARCDWKETPEAHVVTVDVPGVRRGDVRVEVDEASRVLRVSGERRRAGAAEEEEGERDGVRWHRAERAAGRFWRRFRMPPGADVGRVAARLDDGVLTVTVPKVPGHRGREPRVVAIDGAGAGDMEAEVVKASKAEM.

The first 29 residues, 1-29 (MAAVAEREVLGMVAAVAAMVVMMAPPAAA), serve as a signal peptide directing secretion. The sHSP domain occupies 65 to 187 (EPAAVALARC…GREPRVVAID (123 aa)). Residues 94 to 96 (RGD) carry the Cell attachment site motif.

This sequence belongs to the small heat shock protein (HSP20) family. As to quaternary structure, may form oligomeric structures.

It localises to the endoplasmic reticulum. This Oryza sativa subsp. japonica (Rice) protein is 21.9 kDa heat shock protein (HSP21.9).